A 268-amino-acid chain; its full sequence is Phosphatidylglycerol--prolipoprotein diacylglyceryl transferase (268 aa).

7 consecutive transmembrane segments (helical) span residues 23 to 43 (IGLR…RWLA), 62 to 82 (LLFN…VFFY), 97 to 117 (VWEG…AMIW), 132 to 152 (FVAP…FINL), 179 to 199 (SQLY…NIFI), 206 to 226 (ASVA…VEYV), and 241 to 261 (GQAL…WAYS). Arg145 serves as a coordination point for a 1,2-diacyl-sn-glycero-3-phospho-(1'-sn-glycerol).

It belongs to the Lgt family.

The protein localises to the cell inner membrane. It catalyses the reaction L-cysteinyl-[prolipoprotein] + a 1,2-diacyl-sn-glycero-3-phospho-(1'-sn-glycerol) = an S-1,2-diacyl-sn-glyceryl-L-cysteinyl-[prolipoprotein] + sn-glycerol 1-phosphate + H(+). The protein operates within protein modification; lipoprotein biosynthesis (diacylglyceryl transfer). In terms of biological role, catalyzes the transfer of the diacylglyceryl group from phosphatidylglycerol to the sulfhydryl group of the N-terminal cysteine of a prolipoprotein, the first step in the formation of mature lipoproteins. The sequence is that of Phosphatidylglycerol--prolipoprotein diacylglyceryl transferase from Haemophilus influenzae (strain 86-028NP).